Here is a 245-residue protein sequence, read N- to C-terminus: Photosystem II protein PSBS1 (245 aa).

The N-terminal 25 residues, 1 to 25, are a transit peptide targeting the chloroplast; the sequence is MAMTLSTKAFAQRGVSARKNTVRVY. 4 helical membrane passes run 72–92, 108–128, 185–205, and 217–237; these read LFVGRLAMVGFSASLIGEILT, GIEVDGLVIGLIAFNLIAAVL, LGFAFSLIGEAVTGKGALAQF, and EFGLVVFILFLLFAAINEGSG.

Belongs to the ELIP/psbS family.

Its subcellular location is the plastid. It localises to the chloroplast thylakoid membrane. Required for non-photochemical quenching (NPQ), a mechanism that converts and dissipates the harmful excess absorbed light energy into heat and protect the photosynthetic apparatus from photo-oxidative damage. Seems involved in the activation of NPQ, possibly by promoting conformational changes required for activation of LHCSR3-dependent quenching in the antenna of photosystem II (PSII). The sequence is that of Photosystem II protein PSBS1 from Chlamydomonas reinhardtii (Chlamydomonas smithii).